The chain runs to 171 residues: Peptide deformylase (171 aa).

Residues cysteine 91 and histidine 133 each coordinate Fe cation. The active site involves glutamate 134. Histidine 137 is a binding site for Fe cation.

The protein belongs to the polypeptide deformylase family. Requires Fe(2+) as cofactor.

The catalysed reaction is N-terminal N-formyl-L-methionyl-[peptide] + H2O = N-terminal L-methionyl-[peptide] + formate. Functionally, removes the formyl group from the N-terminal Met of newly synthesized proteins. Requires at least a dipeptide for an efficient rate of reaction. N-terminal L-methionine is a prerequisite for activity but the enzyme has broad specificity at other positions. The polypeptide is Peptide deformylase (Cronobacter sakazakii (strain ATCC BAA-894) (Enterobacter sakazakii)).